The primary structure comprises 241 residues: Fatty acid metabolism regulator protein (241 aa).

The HTH gntR-type domain occupies 6 to 74 (KGPASFAEKY…HGKPTRVNNF (69 aa)). Residues 34 to 53 (ERELSELIGVTRTTLREVLQ) constitute a DNA-binding region (H-T-H motif).

As to quaternary structure, homodimer.

Its subcellular location is the cytoplasm. Multifunctional regulator of fatty acid metabolism. This Shewanella sp. (strain ANA-3) protein is Fatty acid metabolism regulator protein.